Here is a 272-residue protein sequence, read N- to C-terminus: D-aminoacyl-tRNA deacylase (272 aa).

It belongs to the DtdA deacylase family. In terms of assembly, monomer. Requires Zn(2+) as cofactor.

It carries out the reaction a D-aminoacyl-tRNA + H2O = a tRNA + a D-alpha-amino acid + H(+). The catalysed reaction is glycyl-tRNA(Ala) + H2O = tRNA(Ala) + glycine + H(+). Its function is as follows. D-aminoacyl-tRNA deacylase with broad substrate specificity. By recycling D-aminoacyl-tRNA to D-amino acids and free tRNA molecules, this enzyme counteracts the toxicity associated with the formation of D-aminoacyl-tRNA entities in vivo. This chain is D-aminoacyl-tRNA deacylase, found in Thermococcus onnurineus (strain NA1).